We begin with the raw amino-acid sequence, 273 residues long: 3-methyl-2-oxobutanoate hydroxymethyltransferase (273 aa).

Residues Asp53 and Asp92 each coordinate Mg(2+). 3-methyl-2-oxobutanoate contacts are provided by residues Asp53 to Ser54, Asp92, and Lys120. Mg(2+) is bound at residue Glu122. Glu189 functions as the Proton acceptor in the catalytic mechanism.

Belongs to the PanB family. Homodecamer; pentamer of dimers. Mg(2+) serves as cofactor.

The protein resides in the cytoplasm. It carries out the reaction 3-methyl-2-oxobutanoate + (6R)-5,10-methylene-5,6,7,8-tetrahydrofolate + H2O = 2-dehydropantoate + (6S)-5,6,7,8-tetrahydrofolate. The protein operates within cofactor biosynthesis; (R)-pantothenate biosynthesis; (R)-pantoate from 3-methyl-2-oxobutanoate: step 1/2. Functionally, catalyzes the reversible reaction in which hydroxymethyl group from 5,10-methylenetetrahydrofolate is transferred onto alpha-ketoisovalerate to form ketopantoate. In Cupriavidus pinatubonensis (strain JMP 134 / LMG 1197) (Cupriavidus necator (strain JMP 134)), this protein is 3-methyl-2-oxobutanoate hydroxymethyltransferase.